The chain runs to 681 residues: Fibulin-1 (681 aa).

Residues 1–17 form the signal peptide; it reads MDLYMIVLLSLCGLLRA. Disulfide bonds link Cys-29–Cys-55, Cys-30–Cys-62, Cys-43–Cys-63, Cys-72–Cys-103, Cys-85–Cys-104, Cys-106–Cys-125, Cys-107–Cys-138, Cys-114–Cys-139, Cys-162–Cys-171, Cys-167–Cys-176, Cys-178–Cys-191, Cys-197–Cys-210, Cys-204–Cys-219, Cys-225–Cys-237, Cys-243–Cys-256, Cys-250–Cys-265, Cys-271–Cys-283, Cys-289–Cys-301, Cys-317–Cys-330, Cys-336–Cys-348, Cys-343–Cys-357, Cys-359–Cys-372, Cys-378–Cys-390, Cys-386–Cys-399, Cys-401–Cys-414, Cys-420–Cys-429, Cys-440–Cys-454, Cys-460–Cys-473, Cys-469–Cys-482, Cys-484–Cys-498, Cys-504–Cys-517, Cys-511–Cys-526, and Cys-531–Cys-553. Anaphylatoxin-like domains lie at 29-63, 68-107, and 108-139; these read CCEDGKKRGLESQDCSSLPLISESTTCRVVQEQCC, EDSICTSGINMAKDQSSCDALLSGSSTCETKTTKMCCECC, and LLGSSRCRIRVSPVSSVCRWSISRGPGVRSCC. The 35-residue stretch at 158 to 192 folds into the EGF-like 1 domain; the sequence is TEDQCRAAGCAQRCLNGTCSCLDGFKLKTDGKHCE. Asn-173 is a glycosylation site (N-linked (GlcNAc...) asparagine). Residues 193–238 form the EGF-like 2; calcium-binding domain; the sequence is DINECLLGPHHCVTGERCINTLGSYRCQREISCGTGYELTDNNKCK. One can recognise an EGF-like 3; calcium-binding domain in the interval 239-284; the sequence is DIDECDLGTHNCAAEMECQNTAGSFRCRPRMQCAAGFIQDALGSCI. The region spanning 285-331 is the EGF-like 4; calcium-binding domain; the sequence is DINECVSVTALSRGQMCFNTVGSFICQRHSVTCGRGYHLNAEGTRCV. An EGF-like 5; calcium-binding domain is found at 332 to 373; that stretch reads DIDECAGPDNSCDGHGCINLVGSYRCECRTGFIFNSISRSCE. Residues 374–415 form the EGF-like 6; calcium-binding domain; it reads DIDECRNYPGRLCAHKCENILGSYKCSCTAGFKLADDGRNCD. Residues 416–455 enclose the EGF-like 7; calcium-binding domain; sequence DVNECESSPCSQGCANVYGSYQSYCRRGYQLSDADGITCE. An EGF-like 8; calcium-binding domain is found at 456-499; it reads DIDECALPTGGHICSYRCHNTPGSFHCTCPASGYTLAANGRSCQ. Residues 500-554 enclose the EGF-like 9; calcium-binding domain; sequence DIDECLTGTHSCSESESCFNIQGGFRCLSFDCPANYRRSGDTRPRVDRADIIRCV.

The protein belongs to the fibulin family. Homomultimerizes and interacts with various extracellular matrix components such as FN1, LAMA1, NID, AGC1 and CSPG2.

The protein localises to the secreted. It is found in the extracellular space. Its subcellular location is the extracellular matrix. In terms of biological role, incorporated into fibronectin-containing matrix fibers. May play a role in cell adhesion and migration along protein fibers within the extracellular matrix (ECM). Could be important for certain developmental processes and contribute to the supramolecular organization of ECM architecture, in particular to those of basement membranes. The chain is Fibulin-1 (fbln1) from Danio rerio (Zebrafish).